A 72-amino-acid polypeptide reads, in one-letter code: uncharacterized protein (72 aa).

The segment at 15-62 is disordered; it reads NNNYNNNNNNNNNNNNNNNNNNNNNNNNNNININNNNNNNNNNNNNNN.

This is an uncharacterized protein from Dictyostelium discoideum (Social amoeba).